The primary structure comprises 456 residues: IQ domain-containing protein IQM3 (456 aa).

An IQ domain is found at T46–E75. The interval S315–G358 is disordered.

In terms of tissue distribution, expressed in roots, rosette and cauline leaves, flowers and siliques, and at lower levels in stems.

The protein localises to the cytoplasm. It localises to the nucleus. In terms of biological role, may be involved in biotic and abiotic stress responses. The sequence is that of IQ domain-containing protein IQM3 from Arabidopsis thaliana (Mouse-ear cress).